The chain runs to 239 residues: 1-(5-phosphoribosyl)-5-[(5-phosphoribosylamino)methylideneamino] imidazole-4-carboxamide isomerase (239 aa).

The active-site Proton acceptor is aspartate 8. Aspartate 129 (proton donor) is an active-site residue.

The protein belongs to the HisA/HisF family.

It is found in the cytoplasm. It catalyses the reaction 1-(5-phospho-beta-D-ribosyl)-5-[(5-phospho-beta-D-ribosylamino)methylideneamino]imidazole-4-carboxamide = 5-[(5-phospho-1-deoxy-D-ribulos-1-ylimino)methylamino]-1-(5-phospho-beta-D-ribosyl)imidazole-4-carboxamide. It functions in the pathway amino-acid biosynthesis; L-histidine biosynthesis; L-histidine from 5-phospho-alpha-D-ribose 1-diphosphate: step 4/9. The polypeptide is 1-(5-phosphoribosyl)-5-[(5-phosphoribosylamino)methylideneamino] imidazole-4-carboxamide isomerase (Bacillus cereus (strain ZK / E33L)).